The following is a 596-amino-acid chain: NADH-quinone oxidoreductase subunit C/D (596 aa).

The interval 1–186 is NADH dehydrogenase I subunit C; that stretch reads MVDIMCNDST…NPFILTKQKE (186 aa). An NADH dehydrogenase I subunit D region spans residues 210–596; it reads NFMFLNLGPN…IDFVMSDVDR (387 aa).

It in the N-terminal section; belongs to the complex I 30 kDa subunit family. The protein in the C-terminal section; belongs to the complex I 49 kDa subunit family. As to quaternary structure, NDH-1 is composed of 13 different subunits. Subunits NuoB, CD, E, F, and G constitute the peripheral sector of the complex.

It is found in the cell inner membrane. The catalysed reaction is a quinone + NADH + 5 H(+)(in) = a quinol + NAD(+) + 4 H(+)(out). Its function is as follows. NDH-1 shuttles electrons from NADH, via FMN and iron-sulfur (Fe-S) centers, to quinones in the respiratory chain. The immediate electron acceptor for the enzyme in this species is believed to be ubiquinone. Couples the redox reaction to proton translocation (for every two electrons transferred, four hydrogen ions are translocated across the cytoplasmic membrane), and thus conserves the redox energy in a proton gradient. The protein is NADH-quinone oxidoreductase subunit C/D of Blochmanniella pennsylvanica (strain BPEN).